Reading from the N-terminus, the 497-residue chain is Lysine--tRNA ligase (497 aa).

Positions 409 and 416 each coordinate Mg(2+).

It belongs to the class-II aminoacyl-tRNA synthetase family. In terms of assembly, homodimer. Mg(2+) serves as cofactor.

It is found in the cytoplasm. The catalysed reaction is tRNA(Lys) + L-lysine + ATP = L-lysyl-tRNA(Lys) + AMP + diphosphate. This Streptococcus pyogenes serotype M49 (strain NZ131) protein is Lysine--tRNA ligase.